Here is a 906-residue protein sequence, read N- to C-terminus: Cadherin-2 (906 aa).

A signal peptide spans 1–25 (MCRIAGAPRTLLPLLAALLQASVEA). Positions 26 to 159 (SGEIALCKTG…HSGHLQRQKR (134 aa)) are excised as a propeptide. A phosphoserine mark is found at serine 96 and serine 135. Cadherin domains are found at residues 160 to 267 (DWVI…RPEF), 268 to 382 (LHQV…PPEF), 383 to 497 (TAMT…NPYF), 498 to 603 (APNP…DNAP), and 604 to 714 (QVLP…DVDR). Residues 160–724 (DWVIPPINLP…IVGAGLGTGA (565 aa)) are Extracellular-facing. Glutamate 170 is a Ca(2+) binding site. N-linked (GlcNAc...) asparagine glycosylation is present at asparagine 190. Ca(2+) contacts are provided by aspartate 226, glutamate 228, aspartate 259, methionine 260, asparagine 261, aspartate 262, and asparagine 263. Asparagine 273 is a glycosylation site (N-linked (GlcNAc...) asparagine). Residues aspartate 293, aspartate 295, and asparagine 301 each contribute to the Ca(2+) site. An N-linked (GlcNAc...) asparagine glycan is attached at asparagine 325. Residue aspartate 353 participates in Ca(2+) binding. N-linked (GlcNAc...) asparagine glycosylation is found at asparagine 402, asparagine 572, asparagine 622, asparagine 651, and asparagine 692. The helical transmembrane segment at 725–745 (IIAILLCIIILLILVLMFVVW) threads the bilayer. The Cytoplasmic portion of the chain corresponds to 746–906 (MKRRDKERQA…LADMYGGGDD (161 aa)). Residues 863-880 (SGSTAGSLSSLNSSSSGG) show a composition bias toward low complexity. Residues 863 to 884 (SGSTAGSLSSLNSSSSGGEQDY) form a disordered region.

As to quaternary structure, homodimer (via extracellular region). Can also form heterodimers with other cadherins (via extracellular region). Dimerization occurs in trans, i.e. with a cadherin chain from another cell. Interacts with CDCP1. Interacts with PCDH8; this complex may also include TAOK2. The interaction with PCDH8 may lead to internalization through TAOK2/p38 MAPK pathway. Identified in a complex containing FGFR4, NCAM1, CDH2, PLCG1, FRS2, SRC, SHC1, GAP43 and CTTN. May interact with OBSCN (via protein kinase domain 2). Interacts with FBXO45. Cleaved by MMP24. Ectodomain cleavage leads to the generation of a soluble 90 kDa N-terminal soluble fragment and a 45 kDa membrane-bound C-terminal fragment 1 (CTF1), which is further cleaved by gamma-secretase into a 35 kDa. Cleavage in neural stem cells by MMP24 affects CDH2-mediated anchorage of neural stem cells to ependymocytes in the adult subependymal zone, leading to modulate neural stem cell quiescence.

The protein localises to the cell membrane. Its subcellular location is the sarcolemma. The protein resides in the cell junction. It localises to the cell surface. It is found in the desmosome. The protein localises to the adherens junction. Functionally, calcium-dependent cell adhesion protein; preferentially mediates homotypic cell-cell adhesion by dimerization with a CDH2 chain from another cell. Cadherins may thus contribute to the sorting of heterogeneous cell types. Acts as a regulator of neural stem cells quiescence by mediating anchorage of neural stem cells to ependymocytes in the adult subependymal zone: upon cleavage by MMP24, CDH2-mediated anchorage is affected, leading to modulate neural stem cell quiescence. Plays a role in cell-to-cell junction formation between pancreatic beta cells and neural crest stem (NCS) cells, promoting the formation of processes by NCS cells. Required for proper neurite branching. Required for pre- and postsynaptic organization. CDH2 may be involved in neuronal recognition mechanism. In hippocampal neurons, may regulate dendritic spine density. This is Cadherin-2 (CDH2) from Callithrix jacchus (White-tufted-ear marmoset).